Consider the following 164-residue polypeptide: Phosphopantetheine adenylyltransferase (164 aa).

Ser-9 lines the substrate pocket. Residues 9-10 (SF) and His-17 contribute to the ATP site. 3 residues coordinate substrate: Lys-41, Val-78, and Arg-92. ATP contacts are provided by residues 93–95 (GLR), Glu-103, and 128–134 (VRTITAT).

Belongs to the bacterial CoaD family. In terms of assembly, homohexamer. The cofactor is Mg(2+).

The protein localises to the cytoplasm. It carries out the reaction (R)-4'-phosphopantetheine + ATP + H(+) = 3'-dephospho-CoA + diphosphate. It functions in the pathway cofactor biosynthesis; coenzyme A biosynthesis; CoA from (R)-pantothenate: step 4/5. In terms of biological role, reversibly transfers an adenylyl group from ATP to 4'-phosphopantetheine, yielding dephospho-CoA (dPCoA) and pyrophosphate. The polypeptide is Phosphopantetheine adenylyltransferase (Brucella anthropi (strain ATCC 49188 / DSM 6882 / CCUG 24695 / JCM 21032 / LMG 3331 / NBRC 15819 / NCTC 12168 / Alc 37) (Ochrobactrum anthropi)).